A 129-amino-acid chain; its full sequence is Photosystem II extrinsic protein V (129 aa).

4 residues coordinate heme c: cysteine 35, cysteine 38, histidine 39, and histidine 90.

This sequence belongs to the cytochrome c family. PsbV subfamily. In terms of assembly, PSII is composed of 1 copy each of membrane proteins PsbA, PsbB, PsbC, PsbD, PsbE, PsbF, PsbH, PsbI, PsbJ, PsbK, PsbL, PsbM, PsbT, PsbX, PsbY, PsbZ, Psb30/Ycf12, peripheral proteins PsbO, CyanoQ (PsbQ), PsbU, PsbV and a large number of cofactors. It forms dimeric complexes. Homodimer in crystal structure. Requires heme c as cofactor.

Its subcellular location is the cellular thylakoid membrane. Functionally, one of the extrinsic, lumenal subunits of photosystem II (PSII). PSII is a light-driven water plastoquinone oxidoreductase, using light energy to abstract electrons from H(2)O, generating a proton gradient subsequently used for ATP formation. The extrinsic proteins stabilize the structure of photosystem II oxygen-evolving complex (OEC), the ion environment of oxygen evolution and protect the OEC against heat-induced inactivation. Low-potential cytochrome c that plays a role in the OEC of PSII. The chain is Photosystem II extrinsic protein V from Limnospira maxima (Arthrospira maxima).